Here is a 143-residue protein sequence, read N- to C-terminus: Antiholin-like protein LrgA (143 aa).

The next 4 helical transmembrane spans lie at 6–26, 30–50, 61–81, and 97–117; these read VYSFLSQAFIFSAIMLISNII, LPIPMPSSVIGLVILFSLLCL, LGTALTGIIGFLFVPSGISVI, and VIVVATVILLAVTGLFAQFIL.

It belongs to the CidA/LrgA family. LrgA subfamily.

The protein resides in the cell membrane. Inhibits the expression or activity of extracellular murein hydrolases by interacting, possibly with LrgB, with the holin-like protein CidA. The LrgAB and CidA proteins may affect the proton motive force of the membrane. May be involved in programmed cell death (PCD), possibly triggering PCD in response to antibiotics and environmental stresses. The polypeptide is Antiholin-like protein LrgA (Bacillus cereus (strain AH187)).